The chain runs to 253 residues: 5'/3'-nucleotidase SurE (253 aa).

Asp-8, Asp-9, Ser-39, and Asn-92 together coordinate a divalent metal cation.

The protein belongs to the SurE nucleotidase family. It depends on a divalent metal cation as a cofactor.

The protein resides in the cytoplasm. It carries out the reaction a ribonucleoside 5'-phosphate + H2O = a ribonucleoside + phosphate. The catalysed reaction is a ribonucleoside 3'-phosphate + H2O = a ribonucleoside + phosphate. It catalyses the reaction [phosphate](n) + H2O = [phosphate](n-1) + phosphate + H(+). In terms of biological role, nucleotidase with a broad substrate specificity as it can dephosphorylate various ribo- and deoxyribonucleoside 5'-monophosphates and ribonucleoside 3'-monophosphates with highest affinity to 3'-AMP. Also hydrolyzes polyphosphate (exopolyphosphatase activity) with the preference for short-chain-length substrates (P20-25). Might be involved in the regulation of dNTP and NTP pools, and in the turnover of 3'-mononucleotides produced by numerous intracellular RNases (T1, T2, and F) during the degradation of various RNAs. The sequence is that of 5'/3'-nucleotidase SurE from Escherichia fergusonii (strain ATCC 35469 / DSM 13698 / CCUG 18766 / IAM 14443 / JCM 21226 / LMG 7866 / NBRC 102419 / NCTC 12128 / CDC 0568-73).